Here is a 213-residue protein sequence, read N- to C-terminus: Charged multivesicular body protein 2b (213 aa).

The residue at position 2 (Ala-2) is an N-acetylalanine. The stretch at 25–55 (QRAIIRDRAALEKQEKQLELEIKKMAKIGNK) forms a coiled coil. A compositionally biased stretch (low complexity) spans 179 to 194 (AKAPSAARSLPSASTS). The interval 179 to 199 (AKAPSAARSLPSASTSKATIS) is disordered. Ser-199 is modified (phosphoserine). The short motif at 201–211 (EEIERQLKALG) is the MIT-interacting motif element.

Belongs to the SNF7 family. Probable core component of the endosomal sorting required for transport complex III (ESCRT-III). ESCRT-III components are thought to multimerize to form a flat lattice on the perimeter membrane of the endosome. Several assembly forms of ESCRT-III may exist that interact and act sequentially. Interacts with CHMP2A. Interacts with VPS4A. Interacts with VPS4B; the interaction is direct. In brain, it is expressed in all neuronal populations with a relatively enhanced expression in the hippocampus, frontal and temporal lobes and in both granule and Purkinje cells of the cerebellum. Not expressed in astrocytes or oligodendrocytes.

Its subcellular location is the cytoplasm. It localises to the cytosol. It is found in the late endosome membrane. In terms of biological role, probable core component of the endosomal sorting required for transport complex III (ESCRT-III) which is involved in multivesicular bodies (MVBs) formation and sorting of endosomal cargo proteins into MVBs. MVBs contain intraluminal vesicles (ILVs) that are generated by invagination and scission from the limiting membrane of the endosome and mostly are delivered to lysosomes enabling degradation of membrane proteins, such as stimulated growth factor receptors, lysosomal enzymes and lipids. The MVB pathway appears to require the sequential function of ESCRT-O, -I,-II and -III complexes. ESCRT-III proteins mostly dissociate from the invaginating membrane before the ILV is released. The ESCRT machinery also functions in topologically equivalent membrane fission events, such as the terminal stages of cytokinesis. ESCRT-III proteins are believed to mediate the necessary vesicle extrusion and/or membrane fission activities, possibly in conjunction with the AAA ATPase VPS4. The chain is Charged multivesicular body protein 2b (Chmp2b) from Mus musculus (Mouse).